A 350-amino-acid chain; its full sequence is D-alanine--D-alanine ligase (350 aa).

The ATP-grasp domain maps to 138–346 (KSAFSSAGLS…LEQLVHKLIQ (209 aa)). 173–228 (ERELNYPCFVKPANLGSSVGISKVRSRQELEAGLEQAAALDPRLVVEQGVNAREVE) contacts ATP. Residues Asp299, Glu313, and Asn315 each contribute to the Mg(2+) site.

It belongs to the D-alanine--D-alanine ligase family. Requires Mg(2+) as cofactor. The cofactor is Mn(2+).

It is found in the cytoplasm. It catalyses the reaction 2 D-alanine + ATP = D-alanyl-D-alanine + ADP + phosphate + H(+). The protein operates within cell wall biogenesis; peptidoglycan biosynthesis. Its function is as follows. Cell wall formation. The chain is D-alanine--D-alanine ligase from Synechococcus sp. (strain CC9605).